We begin with the raw amino-acid sequence, 131 residues long: SPbeta prophage-derived uncharacterized protein YosD (131 aa).

A disordered region spans residues 102–131; that stretch reads EHNNKKAKNNDTQNQRQIKTSWWQRLTKKD. The segment covering 111–125 has biased composition (polar residues); sequence NDTQNQRQIKTSWWQ.

The protein is SPbeta prophage-derived uncharacterized protein YosD (yosD) of Bacillus subtilis (strain 168).